A 199-amino-acid polypeptide reads, in one-letter code: Probable molybdenum cofactor guanylyltransferase (199 aa).

GTP contacts are provided by residues L8–G10, K20, D65, and D96. D96 serves as a coordination point for Mg(2+).

It belongs to the MobA family. Mg(2+) serves as cofactor.

The protein localises to the cytoplasm. The catalysed reaction is Mo-molybdopterin + GTP + H(+) = Mo-molybdopterin guanine dinucleotide + diphosphate. Transfers a GMP moiety from GTP to Mo-molybdopterin (Mo-MPT) cofactor (Moco or molybdenum cofactor) to form Mo-molybdopterin guanine dinucleotide (Mo-MGD) cofactor. The polypeptide is Probable molybdenum cofactor guanylyltransferase (Bacillus subtilis (strain 168)).